The chain runs to 477 residues: (R)-2-hydroxyglutaryl-CoA dehydratase, subunit alpha (477 aa).

It belongs to the FldB/FldC dehydratase alpha/beta subunit family. The (R)-2-hydroxyglutaryl-CoA dehydratase enzyme system is a heterodimer composed of an alpha subunit (HgdA) and a beta subunit (HgdB). The cofactor is [4Fe-4S] cluster. FMN serves as cofactor. Mg(2+) is required as a cofactor.

The protein resides in the cytoplasm. It carries out the reaction (R)-2-hydroxyglutaryl-CoA = (2E)-glutaconyl-CoA + H2O. It functions in the pathway amino-acid degradation; L-glutamate degradation via hydroxyglutarate pathway; crotonoyl-CoA from L-glutamate: step 4/5. Its activity is regulated as follows. Activated by the HgdC. Reversibly inactivated by oxidants such as 2-nitrophenol, 3-nitrophenol, 4-nitrophenol, 4-nitrobenzoate, carbonyl cyanide 4-(trifluoromethoxy)phenylhydrazone (FCCP) and chloramphenicol. Irreversibly inactivated by oxidants such as hydroxylamine and nitrite. In terms of biological role, involved in the fermentation of L-glutamate via the hydroxyglutarate pathway. Catalyzes the reversible syn-elimination of water from (R)-2-hydroxyglutaryl-CoA to yield (E)-glutaconyl-CoA. The dehydration mechanism involves a transient one electron reduction of the thioester from (R)-2-hydroxyglutaryl-CoA, generating a ketyl radical. Prior to (E)-glutaconyl-CoA formation, the ketyl radical is subsequently reoxidized by electron transfer back to the HgdA-HgdB complex (CompD) to avoid change in oxidation state of the substrate. The appropriate redox state of dehydratase HgdA-HgdB complex (CompD) is maintained by HgdC (CompA) via hydrolysis of ATP and ATP-dependent electron transfer. Since the electron is recycled, the dehydratase is able to perform several turnovers with only catalytic amounts of ATP and substoichiometric amounts of HgdC (CompA). This chain is (R)-2-hydroxyglutaryl-CoA dehydratase, subunit alpha, found in Acidaminococcus fermentans (strain ATCC 25085 / DSM 20731 / CCUG 9996 / CIP 106432 / VR4).